The sequence spans 515 residues: Bifunctional purine biosynthesis protein PurH (515 aa).

In terms of domain architecture, MGS-like spans 1–145 (MTKRALISVS…KNHASVTVVV (145 aa)).

The protein belongs to the PurH family.

It carries out the reaction (6R)-10-formyltetrahydrofolate + 5-amino-1-(5-phospho-beta-D-ribosyl)imidazole-4-carboxamide = 5-formamido-1-(5-phospho-D-ribosyl)imidazole-4-carboxamide + (6S)-5,6,7,8-tetrahydrofolate. The enzyme catalyses IMP + H2O = 5-formamido-1-(5-phospho-D-ribosyl)imidazole-4-carboxamide. It functions in the pathway purine metabolism; IMP biosynthesis via de novo pathway; 5-formamido-1-(5-phospho-D-ribosyl)imidazole-4-carboxamide from 5-amino-1-(5-phospho-D-ribosyl)imidazole-4-carboxamide (10-formyl THF route): step 1/1. The protein operates within purine metabolism; IMP biosynthesis via de novo pathway; IMP from 5-formamido-1-(5-phospho-D-ribosyl)imidazole-4-carboxamide: step 1/1. The polypeptide is Bifunctional purine biosynthesis protein PurH (Streptococcus pyogenes serotype M2 (strain MGAS10270)).